Consider the following 429-residue polypeptide: Glucose-1-phosphate adenylyltransferase (429 aa).

Alpha-D-glucose 1-phosphate is bound by residues Gly-162, 177-178 (EK), and Ser-209.

Belongs to the bacterial/plant glucose-1-phosphate adenylyltransferase family. As to quaternary structure, homotetramer.

The enzyme catalyses alpha-D-glucose 1-phosphate + ATP + H(+) = ADP-alpha-D-glucose + diphosphate. The protein operates within glycan biosynthesis; glycogen biosynthesis. Its function is as follows. Involved in the biosynthesis of ADP-glucose, a building block required for the elongation reactions to produce glycogen. Catalyzes the reaction between ATP and alpha-D-glucose 1-phosphate (G1P) to produce pyrophosphate and ADP-Glc. This chain is Glucose-1-phosphate adenylyltransferase, found in Trichormus variabilis (strain ATCC 29413 / PCC 7937) (Anabaena variabilis).